Consider the following 269-residue polypeptide: MSRLEQRFAELKAEGRSALVTFVTAGDPGYDASLQILKGLPAAGADVIELGMPFTDPMADGVAIQLATLRALEAGQTLAKTLQMVREFRVDNQTTPIVLMGYYNPIHRFGVDTFVAEAKAAGVDGLIIVDLPPEHDAELATPAQAAGIDFIRLTTPTTDDARLPRVLERSSGFVYYVSVAGVTGAGSATTEHVTEAIARLRRHTDLPISVGFGIRTPEQAANIARLADGVVVGSALVDKIAQAKSADQAVTDVLSLCSALAEGVRGARR.

Catalysis depends on proton acceptor residues glutamate 49 and aspartate 60.

Belongs to the TrpA family. Tetramer of two alpha and two beta chains.

The catalysed reaction is (1S,2R)-1-C-(indol-3-yl)glycerol 3-phosphate + L-serine = D-glyceraldehyde 3-phosphate + L-tryptophan + H2O. The protein operates within amino-acid biosynthesis; L-tryptophan biosynthesis; L-tryptophan from chorismate: step 5/5. Its function is as follows. The alpha subunit is responsible for the aldol cleavage of indoleglycerol phosphate to indole and glyceraldehyde 3-phosphate. The protein is Tryptophan synthase alpha chain of Pseudomonas putida (strain ATCC 700007 / DSM 6899 / JCM 31910 / BCRC 17059 / LMG 24140 / F1).